We begin with the raw amino-acid sequence, 541 residues long: Chaperonin GroEL (541 aa).

Residues T29–P32, D86–T90, G413, N476–A478, and D492 each bind ATP.

Belongs to the chaperonin (HSP60) family. Forms a cylinder of 14 subunits composed of two heptameric rings stacked back-to-back. Interacts with the co-chaperonin GroES.

It localises to the cytoplasm. The catalysed reaction is ATP + H2O + a folded polypeptide = ADP + phosphate + an unfolded polypeptide.. In terms of biological role, together with its co-chaperonin GroES, plays an essential role in assisting protein folding. The GroEL-GroES system forms a nano-cage that allows encapsulation of the non-native substrate proteins and provides a physical environment optimized to promote and accelerate protein folding. The polypeptide is Chaperonin GroEL (Streptococcus equi subsp. zooepidemicus (strain MGCS10565)).